A 321-amino-acid chain; its full sequence is Lipoyl synthase (321 aa).

7 residues coordinate [4Fe-4S] cluster: Cys68, Cys73, Cys79, Cys94, Cys98, Cys101, and Ser308. In terms of domain architecture, Radical SAM core spans 80-297 (FNHGTATFMI…KDYAEEIGFT (218 aa)).

Belongs to the radical SAM superfamily. Lipoyl synthase family. It depends on [4Fe-4S] cluster as a cofactor.

It localises to the cytoplasm. The catalysed reaction is [[Fe-S] cluster scaffold protein carrying a second [4Fe-4S](2+) cluster] + N(6)-octanoyl-L-lysyl-[protein] + 2 oxidized [2Fe-2S]-[ferredoxin] + 2 S-adenosyl-L-methionine + 4 H(+) = [[Fe-S] cluster scaffold protein] + N(6)-[(R)-dihydrolipoyl]-L-lysyl-[protein] + 4 Fe(3+) + 2 hydrogen sulfide + 2 5'-deoxyadenosine + 2 L-methionine + 2 reduced [2Fe-2S]-[ferredoxin]. It participates in protein modification; protein lipoylation via endogenous pathway; protein N(6)-(lipoyl)lysine from octanoyl-[acyl-carrier-protein]: step 2/2. In terms of biological role, catalyzes the radical-mediated insertion of two sulfur atoms into the C-6 and C-8 positions of the octanoyl moiety bound to the lipoyl domains of lipoate-dependent enzymes, thereby converting the octanoylated domains into lipoylated derivatives. The protein is Lipoyl synthase of Shewanella loihica (strain ATCC BAA-1088 / PV-4).